The following is a 239-amino-acid chain: MDVEKDVLDVYIKNLENQIGNKRYFLKQAQGAIDEITKRSLDTEGKPVNSEVFTELLRKPMFFSERADPIGFSLTSNFLSLRAQSSSEWLSLMNDQSVDQKAMLLLQNNINSDLKELLRKLQHQMTIMDSKKQDHAHIRTRKARNKELWDSLADFLKGYLVPNLDDNDESIDSLTNEVMLLMKRLIEHDLNLTLNDFSSKTIPIYRLLLRANIITVIEGSTNPGTKYIKLIDFNETSLT.

The protein belongs to the CENP-K/MCM22 family. Component of the heterotrimeric kinetochore subcomplex CTF3, which consists of CTF3, MCM16 and MCM22. The CTF3 subcomplex is part of a larger constitutive centromere-associated network (CCAN) (also known as central kinetochore CTF19 complex in yeast), which is composed of at least AME1, CHL4, CNN1, CTF3, CTF19, IML3, MCM16, MCM21, MCM22, MHF1, MHF2, MIF2, NKP1, NKP2, OKP1 and WIP1. Interacts with CTF19.

The protein resides in the nucleus. It localises to the chromosome. Its subcellular location is the centromere. The protein localises to the kinetochore. Its function is as follows. Component of the kinetochore, a multiprotein complex that assembles on centromeric DNA and attaches chromosomes to spindle microtubules, mediating chromosome segregation and sister chromatid segregation during meiosis and mitosis. Component of the inner kinetochore constitutive centromere-associated network (CCAN), which serves as a structural platform for outer kinetochore assembly. The protein is Inner kinetochore subunit MCM22 (MCM22) of Saccharomyces cerevisiae (strain ATCC 204508 / S288c) (Baker's yeast).